A 376-amino-acid chain; its full sequence is Phosphoglycerate kinase (376 aa).

(2R)-3-phosphoglycerate contacts are provided by Val1, Asp2, Phe3, Asn4, Arg17, Ser40, His41, Gly43, Arg44, Leu99, Arg100, His147, and Arg148. Gly191 contributes to the ADP binding site. Residue Gly191 participates in CDP binding. Residues Ala192 and Lys193 each coordinate AMP. Ala192 contacts ATP. Ala192 is a Mg(2+) binding site. CDP is bound at residue Asp196. Mg(2+) is bound at residue Asp196. Position 197 (Lys197) interacts with AMP. Lys197 contributes to the ATP binding site. Gly215 serves as a coordination point for ADP. Gly215 is a CDP binding site. AMP is bound by residues Gly216 and Gly290. 2 residues coordinate ATP: Gly216 and Gly290. Residues Gly315 and Phe320 each contribute to the CDP site. Phe320 is an ADP binding site. Glu321 serves as a coordination point for AMP. ATP-binding residues include Glu321, Asp352, and Thr353. Position 352 (Asp352) interacts with Mg(2+).

This sequence belongs to the phosphoglycerate kinase family. In terms of assembly, monomer. Mg(2+) serves as cofactor.

It carries out the reaction (2R)-3-phosphoglycerate + ATP = (2R)-3-phospho-glyceroyl phosphate + ADP. It participates in carbohydrate degradation; glycolysis; pyruvate from D-glyceraldehyde 3-phosphate: step 2/5. The sequence is that of Phosphoglycerate kinase (PGK) from Glaucoma chattoni.